The primary structure comprises 392 residues: Ribonuclease D (392 aa).

The region spanning L12–L178 is the 3'-5' exonuclease domain. Residues N217 to E298 form the HRDC domain.

This sequence belongs to the RNase D family. Requires a divalent metal cation as cofactor.

The protein resides in the cytoplasm. It carries out the reaction Exonucleolytic cleavage that removes extra residues from the 3'-terminus of tRNA to produce 5'-mononucleotides.. Functionally, exonuclease involved in the 3' processing of various precursor tRNAs. Initiates hydrolysis at the 3'-terminus of an RNA molecule and releases 5'-mononucleotides. In Acidiphilium cryptum (strain JF-5), this protein is Ribonuclease D.